A 159-amino-acid polypeptide reads, in one-letter code: ATP-dependent Clp protease adapter protein CLPS1, chloroplastic (159 aa).

A chloroplast-targeting transit peptide spans 1–44 (METAICGRLALAPSSLFNSKSGDKHLVSKGPCVNRSILMTLSTS).

The protein belongs to the ClpS family. Interacts with CLPC1 (via N-terminus) and CLPC2, but not with CLPt1 or CLPT2. Binds to ClpF; this interaction stimulates their association with ClpC. As to expression, expressed exclusively in photosynthetic green tissues with high levels in young, developing leaf tissues.

The protein localises to the plastid. It is found in the chloroplast stroma. Small adapter protein that modulate the activity of CLPC. Involved in plastid biogenesis in particular when chloroplast protein synthesis capacity is a limiting factor. Probably involved in substrate selection for plastid Clp protease system. Recruitment to ClpC chaperones is facilitated by CLPF thus forming a binary adapter for selective substrate recognition and delivery to plastid Clp protease system (CLPC). The polypeptide is ATP-dependent Clp protease adapter protein CLPS1, chloroplastic (Arabidopsis thaliana (Mouse-ear cress)).